Here is a 351-residue protein sequence, read N- to C-terminus: Silk gland factor 3 (351 aa).

Disordered stretches follow at residues 61 to 88 (ADPWAMHQHHAHAHQPDVKPPPAPHDHR) and 131 to 154 (SSPRDPLHHHAMERDQPEEDTPTS). Basic and acidic residues predominate over residues 135–145 (DPLHHHAMERD). The POU-specific domain occupies 149 to 223 (EDTPTSDDLE…LLQKWLEEAD (75 aa)). The homeobox DNA-binding region spans 241-300 (KRKKRTSIEVSVKGALEQHFHKQPKPSAQEITSLADSLQLEKEVVRVWFCNRRQKEKRMT). The disordered stretch occupies residues 314–351 (GHAHYGHGDVHGSPLQHSPPGLSPQHGLPQGAHTLAAH).

The protein belongs to the POU transcription factor family. Class-3 subfamily. In terms of tissue distribution, restricted to the middle silk gland.

The protein localises to the nucleus. Involved in the transcriptional regulation of sericin-1 gene. This Bombyx mori (Silk moth) protein is Silk gland factor 3 (SGF3).